The following is a 516-amino-acid chain: Adenine DNA glycosylase (516 aa).

The segment covering 1–23 has biased composition (basic residues); that stretch reads MKKLRASVRSHKKQPANHKRRGK. Positions 1-38 are disordered; the sequence is MKKLRASVRSHKKQPANHKRRGKCALSSSQAKPSGLDG. The active-site Proton donor/acceptor is E105. 4 residues coordinate [4Fe-4S] cluster: C261, C268, C271, and C277. Residues 335–467 enclose the Nudix hydrolase domain; the sequence is PREEYSATCV…AMKKVFRVYE (133 aa). A Nudix box motif is present at residues 376-398; sequence VTLEPSGQHQHKALLQELQHWSA. The disordered stretch occupies residues 474-516; it reads CKGSKRPQVCTPSSRKKPSRGQQVLDRFFQRHIPTHKPNSTTQ.

The protein belongs to the Nth/MutY family. [4Fe-4S] cluster is required as a cofactor. In terms of tissue distribution, expressed in brain, spleen, heart, liver and kidney.

The protein localises to the nucleus. Its subcellular location is the mitochondrion. The enzyme catalyses Hydrolyzes free adenine bases from 7,8-dihydro-8-oxoguanine:adenine mismatched double-stranded DNA, leaving an apurinic site.. In terms of biological role, involved in oxidative DNA damage repair. Initiates repair of A*oxoG to C*G by removing the inappropriately paired adenine base from the DNA backbone. Possesses both adenine and 2-OH-A DNA glycosylase activities. This is Adenine DNA glycosylase (Mutyh) from Rattus norvegicus (Rat).